Here is a 106-residue protein sequence, read N- to C-terminus: Integration host factor subunit beta (106 aa).

Positions proline 57–alanine 106 are disordered. The segment covering threonine 82–leucine 95 has biased composition (basic and acidic residues).

Belongs to the bacterial histone-like protein family. Heterodimer of an alpha and a beta chain.

Functionally, this protein is one of the two subunits of integration host factor, a specific DNA-binding protein that functions in genetic recombination as well as in transcriptional and translational control. This Afipia carboxidovorans (strain ATCC 49405 / DSM 1227 / KCTC 32145 / OM5) (Oligotropha carboxidovorans) protein is Integration host factor subunit beta.